Here is a 153-residue protein sequence, read N- to C-terminus: Prefoldin subunit alpha (153 aa).

Residues 126 to 153 (KRLEQGYRQAPGGSPVPHRHDHEDHDEE) form a disordered region. Residues 143–153 (HRHDHEDHDEE) are compositionally biased toward basic and acidic residues.

Belongs to the prefoldin alpha subunit family. In terms of assembly, heterohexamer of two alpha and four beta subunits.

It is found in the cytoplasm. Its function is as follows. Molecular chaperone capable of stabilizing a range of proteins. Seems to fulfill an ATP-independent, HSP70-like function in archaeal de novo protein folding. The protein is Prefoldin subunit alpha of Methanoregula boonei (strain DSM 21154 / JCM 14090 / 6A8).